An 882-amino-acid polypeptide reads, in one-letter code: DNA polymerase 1 (882 aa).

Positions 1-31 (MTKQLTLFDIPSSKPAKSEQNTQQSQQSAPV) are disordered. Residues 18 to 29 (SEQNTQQSQQSA) are compositionally biased toward polar residues.

Belongs to the DNA polymerase type-B family. In terms of assembly, interacts with PCNA subunit PCNA2 and weakly with PCNA3.

The enzyme catalyses DNA(n) + a 2'-deoxyribonucleoside 5'-triphosphate = DNA(n+1) + diphosphate. DNA synthesis is stimulated by PCNA heterotrimers. Functionally, this polymerase possesses two enzymatic activities: DNA synthesis (polymerase) and an exonucleolytic activity that degrades single-stranded DNA in the 3'- to 5'-direction. DNA polymerase I, DNA ligase and the flap endonuclease may be constitutively associated with the PCNA heterotrimer forming a scanning complex able to couple DNA synthesis and Okazaki fragment maturation. The sequence is that of DNA polymerase 1 (dpo1) from Saccharolobus solfataricus (strain ATCC 35092 / DSM 1617 / JCM 11322 / P2) (Sulfolobus solfataricus).